A 275-amino-acid chain; its full sequence is Large ribosomal subunit protein uL2c (275 aa).

The disordered stretch occupies residues 223–255; the sequence is VVMNPVDHPHGGGEGRAPIGRSRPVTPWGRPAL.

The protein belongs to the universal ribosomal protein uL2 family. In terms of assembly, part of the 50S ribosomal subunit.

The protein localises to the plastid. It localises to the chloroplast. In Pleurastrum terricola (Filamentous green alga), this protein is Large ribosomal subunit protein uL2c (rpl2).